We begin with the raw amino-acid sequence, 271 residues long: Large ribosomal subunit protein uL3c (271 aa).

Residues 1–49 constitute a chloroplast transit peptide; that stretch reads MAIAMAVVSFPSLLNKTTLSSSLFTPTFLPAKSSSLLIKSSPKTRFVVS. The interval 190-222 is disordered; it reads HGSKSHRALGSIGAGTTPGRVYKGKKMPGRMGG.

The protein belongs to the universal ribosomal protein uL3 family. In terms of assembly, part of the 50S ribosomal subunit.

Its subcellular location is the plastid. It is found in the chloroplast. Its function is as follows. One of the primary rRNA binding proteins, it binds directly near the 3'-end of the 23S rRNA, where it nucleates assembly of the 50S subunit. The polypeptide is Large ribosomal subunit protein uL3c (RPL3A) (Arabidopsis thaliana (Mouse-ear cress)).